The sequence spans 445 residues: UPF0210 protein SSA_2018 (445 aa).

This sequence belongs to the UPF0210 family. Homodimer.

The protein is UPF0210 protein SSA_2018 of Streptococcus sanguinis (strain SK36).